A 227-amino-acid chain; its full sequence is Ribose-5-phosphate isomerase A (227 aa).

Substrate is bound by residues Thr26–Thr29, Asp82–Asp85, and Lys95–Gly98. The active-site Proton acceptor is Glu104. Substrate is bound at residue Lys122.

This sequence belongs to the ribose 5-phosphate isomerase family. As to quaternary structure, homodimer.

It carries out the reaction aldehydo-D-ribose 5-phosphate = D-ribulose 5-phosphate. It functions in the pathway carbohydrate degradation; pentose phosphate pathway; D-ribose 5-phosphate from D-ribulose 5-phosphate (non-oxidative stage): step 1/1. In terms of biological role, catalyzes the reversible conversion of ribose-5-phosphate to ribulose 5-phosphate. This Streptococcus equi subsp. equi (strain 4047) protein is Ribose-5-phosphate isomerase A.